The sequence spans 156 residues: Phospholipase A2 A2-hormotoxin-Apt1a (156 aa).

Positions 1-19 (MQLYTYFFTFSLVLILALA) are cleaved as a signal peptide. A propeptide spanning residues 20–35 (DQENKSLDFTQEGGIA) is cleaved from the precursor. 5 disulfide bridges follow: cysteine 62–cysteine 156, cysteine 64–cysteine 80, cysteine 79–cysteine 138, cysteine 86–cysteine 131, and cysteine 115–cysteine 129. 2 residues coordinate Ca(2+): glycine 65 and glycine 67. Histidine 83 is a catalytic residue. Aspartate 84 is a binding site for Ca(2+). Aspartate 132 is a catalytic residue.

This sequence belongs to the phospholipase A2 family. Ca(2+) serves as cofactor.

It localises to the secreted. It is found in the nematocyst. It carries out the reaction a 1,2-diacyl-sn-glycero-3-phosphocholine + H2O = a 1-acyl-sn-glycero-3-phosphocholine + a fatty acid + H(+). Sea anemone phospholipase A2 (PLA2) that may have a role both in defense and in digestion, since its expression and enzymatic activity were found both in the acontia (defensive organs) and tentacles. PLA2 catalyzes the calcium-dependent hydrolysis of the 2-acyl groups in 3-sn-phosphoglycerides. The polypeptide is Phospholipase A2 A2-hormotoxin-Apt1a (Adamsia palliata (Cloak anemone)).